A 242-amino-acid polypeptide reads, in one-letter code: 7-cyano-7-deazaguanine synthase (242 aa).

Residue 12 to 22 (FSGGQDSTTCL) participates in ATP binding. 4 residues coordinate Zn(2+): cysteine 200, cysteine 215, cysteine 218, and cysteine 221.

This sequence belongs to the QueC family. The cofactor is Zn(2+).

It carries out the reaction 7-carboxy-7-deazaguanine + NH4(+) + ATP = 7-cyano-7-deazaguanine + ADP + phosphate + H2O + H(+). It participates in purine metabolism; 7-cyano-7-deazaguanine biosynthesis. Functionally, catalyzes the ATP-dependent conversion of 7-carboxy-7-deazaguanine (CDG) to 7-cyano-7-deazaguanine (preQ(0)). The chain is 7-cyano-7-deazaguanine synthase from Nitratidesulfovibrio vulgaris (strain ATCC 29579 / DSM 644 / CCUG 34227 / NCIMB 8303 / VKM B-1760 / Hildenborough) (Desulfovibrio vulgaris).